We begin with the raw amino-acid sequence, 256 residues long: Large ribosomal subunit protein bL28m (256 aa).

The N-terminal 55 residues, 1 to 55, are a transit peptide targeting the mitochondrion; sequence MPLHKYPVWLWKRLQLREGICSRLPGHYLRSLEEERTPTPVHYRPHGAKFKINPK.

It belongs to the bacterial ribosomal protein bL28 family. In terms of assembly, component of the mitochondrial large ribosomal subunit (mt-LSU). Mature mammalian 55S mitochondrial ribosomes consist of a small (28S) and a large (39S) subunit. The 28S small subunit contains a 12S ribosomal RNA (12S mt-rRNA) and 30 different proteins. The 39S large subunit contains a 16S rRNA (16S mt-rRNA), a copy of mitochondrial valine transfer RNA (mt-tRNA(Val)), which plays an integral structural role, and 52 different proteins. Interacts with OXA1L. In terms of tissue distribution, found in a variety of normal tissues including spleen, testes, thymus, liver, kidney, brain, adrenal, lung and retinal tissue.

The protein localises to the mitochondrion. The protein is Large ribosomal subunit protein bL28m (MRPL28) of Homo sapiens (Human).